A 224-amino-acid polypeptide reads, in one-letter code: MALLSIRNVFKSYFLHGKRIDILRGVSLDIQRGELVSLVGASGAGKSTFLHVLGTLDAPAAGEVMFEDRSVFSMNDAEIAEFRNQTIGFVFQSHFLLPEFTALENVAMPALIRRQDRTAAYAYARELLERVGLGHRVDHRPGELSGGEAQRVALARALVLKPAVLLADEPTGNLDPATGEGIHQLLREVNREQGITAVVVTHNETLARSMPRRLRLAGGEVSEA.

In terms of domain architecture, ABC transporter spans 4-224 (LSIRNVFKSY…RLAGGEVSEA (221 aa)). 40 to 47 (GASGAGKS) provides a ligand contact to ATP.

The protein belongs to the ABC transporter superfamily. Lipoprotein translocase (TC 3.A.1.125) family. In terms of assembly, the complex is composed of two ATP-binding proteins (LolD) and two transmembrane proteins (LolC and LolE).

The protein resides in the cell inner membrane. Functionally, part of the ABC transporter complex LolCDE involved in the translocation of mature outer membrane-directed lipoproteins, from the inner membrane to the periplasmic chaperone, LolA. Responsible for the formation of the LolA-lipoprotein complex in an ATP-dependent manner. The chain is Lipoprotein-releasing system ATP-binding protein LolD from Myxococcus xanthus (strain DK1622).